Consider the following 382-residue polypeptide: S-adenosylmethionine synthase (382 aa).

His-16 is an ATP binding site. A Mg(2+)-binding site is contributed by Asp-18. Residue Glu-44 participates in K(+) binding. The L-methionine site is built by Glu-57 and Gln-100. Residues 100-110 form a flexible loop region; it reads QSADIAMGVDE. Residues 165 to 167, Asp-240, 246 to 247, Ala-263, and Lys-267 contribute to the ATP site; these read DAK and RK. Asp-240 provides a ligand contact to L-methionine. Lys-271 is an L-methionine binding site.

This sequence belongs to the AdoMet synthase family. As to quaternary structure, homotetramer; dimer of dimers. Mg(2+) is required as a cofactor. The cofactor is K(+).

Its subcellular location is the cytoplasm. The enzyme catalyses L-methionine + ATP + H2O = S-adenosyl-L-methionine + phosphate + diphosphate. The protein operates within amino-acid biosynthesis; S-adenosyl-L-methionine biosynthesis; S-adenosyl-L-methionine from L-methionine: step 1/1. Functionally, catalyzes the formation of S-adenosylmethionine (AdoMet) from methionine and ATP. The overall synthetic reaction is composed of two sequential steps, AdoMet formation and the subsequent tripolyphosphate hydrolysis which occurs prior to release of AdoMet from the enzyme. The sequence is that of S-adenosylmethionine synthase from Saccharophagus degradans (strain 2-40 / ATCC 43961 / DSM 17024).